The sequence spans 829 residues: Leucine--tRNA ligase (829 aa).

The 'HIGH' region signature appears at 40–50; sequence PYPSGNIHMGH. The 'KMSKS' region signature appears at 581-585; it reads KMSKS. Lys-584 contacts ATP.

Belongs to the class-I aminoacyl-tRNA synthetase family.

It localises to the cytoplasm. The catalysed reaction is tRNA(Leu) + L-leucine + ATP = L-leucyl-tRNA(Leu) + AMP + diphosphate. The sequence is that of Leucine--tRNA ligase from Oleidesulfovibrio alaskensis (strain ATCC BAA-1058 / DSM 17464 / G20) (Desulfovibrio alaskensis).